The primary structure comprises 363 residues: Heat-inducible transcription repressor HrcA (363 aa).

The protein belongs to the HrcA family.

Its function is as follows. Negative regulator of class I heat shock genes (grpE-dnaK-dnaJ and groELS operons). Prevents heat-shock induction of these operons. The protein is Heat-inducible transcription repressor HrcA of Afipia carboxidovorans (strain ATCC 49405 / DSM 1227 / KCTC 32145 / OM5) (Oligotropha carboxidovorans).